We begin with the raw amino-acid sequence, 196 residues long: Adenylate kinase (196 aa).

Residue 10–15 (GAGKGT) participates in ATP binding. The interval 30–59 (STGDMLRAAVSAGTEIGKRAKAVMDAGGLV) is NMP. AMP is bound by residues threonine 31, arginine 36, 57-59 (GLV), 85-88 (GYPR), and glutamine 92. Positions 126–142 (NRVAETIAAGGTVRSDD) are LID. Arginine 127 provides a ligand contact to ATP. 2 residues coordinate AMP: arginine 139 and arginine 150. Alanine 178 is an ATP binding site.

This sequence belongs to the adenylate kinase family. As to quaternary structure, monomer.

Its subcellular location is the cytoplasm. The enzyme catalyses AMP + ATP = 2 ADP. It participates in purine metabolism; AMP biosynthesis via salvage pathway; AMP from ADP: step 1/1. In terms of biological role, catalyzes the reversible transfer of the terminal phosphate group between ATP and AMP. Plays an important role in cellular energy homeostasis and in adenine nucleotide metabolism. This is Adenylate kinase from Agrobacterium fabrum (strain C58 / ATCC 33970) (Agrobacterium tumefaciens (strain C58)).